The primary structure comprises 389 residues: MAEPDPSDPLETQAGKVQEAQDSDSDTEGGATGGEAEMDFLRNLFTQTLGLGSQKERLLDELTLEGVTRYMQSERCRKVICLVGAGISTSAGIPDFRSPSTGLYANLEKYHLPYPEAIFEISYFKKHPEPFFALAKELYPGQFKPTICHYFIRLLKEKGLLLRCYTQNIDTLERVAGLEPQDLVEAHGTFYTSHCVNTSCRKEYTMGWMKEKIFSEATPRCEQCQSVVKPDIVFFGENLPSRFFSCMQSDFSKVDLLIIMGTSLQVQPFASLISKAPLATPRLLINKEKTGQTDPFLGMMMGLGGGMDFDSKKAYRDVAWLGDCDQGCLALADLLGWKKELEDLVRREHANIDAQSGSQAPNPSTTISPGKSPPPAKEAARTKEKEEQQ.

Residues 1–34 (MAEPDPSDPLETQAGKVQEAQDSDSDTEGGATGG) are disordered. Position 2 is an N-acetylalanine (A2). Phosphoserine is present on residues S23 and S25. The residue at position 27 (T27) is a Phosphothreonine. Positions 41 to 51 (LRNLFTQTLGL) match the Nuclear export signal motif. S53 is subject to Phosphoserine. Residues 57–338 (RLLDELTLEG…LALADLLGWK (282 aa)) enclose the Deacetylase sirtuin-type domain. NAD(+) contacts are provided by residues 85–89 (AGIST) and 95–97 (DFR). S100 carries the phosphoserine modification. 167–170 (QNID) provides a ligand contact to NAD(+). H187 (proton acceptor) is an active-site residue. Residues C195, C200, C221, and C224 each coordinate Zn(2+). NAD(+) contacts are provided by residues 262-263 (TS), 286-288 (NKE), and C324. The segment at 350-389 (ANIDAQSGSQAPNPSTTISPGKSPPPAKEAARTKEKEEQQ) is disordered. The span at 353-369 (DAQSGSQAPNPSTTISP) shows a compositional bias: polar residues. Phosphoserine occurs at positions 368 and 372. Residues 378–389 (EAARTKEKEEQQ) show a composition bias toward basic and acidic residues.

Belongs to the sirtuin family. Class I subfamily. Interacts with CDC20, FOXO3 and FZR1. Associates with microtubule in primary cortical mature neurons. Homotrimer. Interacts (via both phosphorylated, unphosphorylated, active or inactive forms) with HDAC6; the interaction is necessary for the complex to interact with alpha-tubulin, suggesting that these proteins belong to a large complex that deacetylates the cytoskeleton. Interacts with FOXO1; the interaction is disrupted upon serum-starvation or oxidative stress, leading to increased level of acetylated FOXO1 and induction of autophagy. Interacts with RELA; the interaction occurs in the cytoplasm and is increased in a TNF-alpha-dependent manner. Interacts with HOXA10; the interaction is direct. Interacts with YWHAB and YWHAG; the interactions occur in a AKT-dependent manner and increase SIRT2-dependent TP53 deacetylation. Interacts with MAPK1/ERK2 and MAPK3/ERK1; the interactions increase SIRT2 stability and deacetylation activity. Interacts (phosphorylated form) with KMT5A isoform 2; the interaction is direct, stimulates KMT5A-mediated methyltransferase activity on histone at 'Lys-20' (H4K20me1) and is increased in a H(2)O(2)-induced oxidative stress-dependent manner. Interacts with G6PD; the interaction is enhanced by H(2)O(2) treatment. Interacts with a G1/S-specific cyclin E-CDK2 complex. Interacts with AURKA, CDK5R1 (p35 form) and CDK5 and HIF1A. Interacts with the tRNA ligase SARS1; recruited to the VEGFA promoter via interaction with SARS1. Isoform 2 and isoform 4 associate with microtubules in primary cortical mature neurons. Interacts with BEX4; negatively regulates alpha-tubulin deacetylation by SIRT2. Zn(2+) is required as a cofactor. Phosphorylated at phosphoserine and phosphothreonine. Phosphorylated at Ser-368 by a mitotic kinase CDK1/cyclin B at the G2/M transition; phosphorylation regulates the delay in cell-cycle progression. Phosphorylated at Ser-368 by a mitotic kinase G1/S-specific cyclin E/Cdk2 complex; phosphorylation inactivates SIRT2-mediated alpha-tubulin deacetylation and thereby negatively regulates cell adhesion, cell migration and neurite outgrowth during neuronal differentiation. Phosphorylated by cyclin A/Cdk2 and p35-Cdk5 complexes and to a lesser extent by the cyclin D3/Cdk4 and cyclin B/Cdk1, in vitro. Dephosphorylated at Ser-368 by CDC14A and CDC14B around early anaphase. Post-translationally, acetylated by EP300; acetylation leads both to the decreased of SIRT2-mediated alpha-tubulin deacetylase activity and SIRT2-mediated down-regulation of TP53 transcriptional activity. In terms of processing, ubiquitinated. As to expression, isoform 1 is weakly expressed in the cortex at postnatal(P) days P1, P3 and P7, and increases progressively between P17 and older adult cortex. Isoform 1 is also expressed in heart, liver and skeletal muscle, weakly expressed in the striatum and spinal cord. Isoform 2 is not expressed in the cortex at P1, P3 and P7, and increases strongly and progressively between P17 and older adult cortex. Isoform 2 is also expressed in the heart, liver, striatum and spinal cord. Isoform 4 is weakly expressed in older adult cortex and spinal cords. Expressed in the cortex. Expressed in postnatal sciatic nerves during myelination and during remyelination after nerve injury. Expressed in neurons, oligodendrocytes, Schwann cells, Purkinje cells and in astrocytes of white matter. Strongly expressed in preadipocytes compared with differentiated adipocytes. Expressed in cerebellar granule cells. Expressed in the inner ear: in the cochlea, expressed in types I and V fibrocytes in the spiral ligament (SL) and slightly in stria vascularis (SV); in the organ of Corti, expressed in some supporting cells; in the crista ampullaris, expressed in spiral ganglion cells; also expressed in the endolymphatic sac (ES) epithelial cells (at protein level). Expressed in the brain, spinal cord, optic nerve and hippocampus. Strongly expressed in 6-8 week-old ovulated meiosis II oocytes and weakly expressed in 45-58 week-old ovulated meiosis II oocytes. Expressed in the cochlea, vestibule and acoustic nerve of the inner ear.

Its subcellular location is the nucleus. It is found in the cytoplasm. The protein resides in the perinuclear region. It localises to the perikaryon. The protein localises to the cytoskeleton. Its subcellular location is the cell projection. It is found in the growth cone. The protein resides in the myelin membrane. It localises to the microtubule organizing center. The protein localises to the centrosome. Its subcellular location is the spindle. It is found in the chromosome. The protein resides in the midbody. It localises to the centriole. The catalysed reaction is N(6)-acetyl-L-lysyl-[protein] + NAD(+) + H2O = 2''-O-acetyl-ADP-D-ribose + nicotinamide + L-lysyl-[protein]. It catalyses the reaction N(6)-tetradecanoyl-L-lysyl-[protein] + NAD(+) + H2O = 2''-O-tetradecanoyl-ADP-D-ribose + nicotinamide + L-lysyl-[protein]. It carries out the reaction N(6)-hexadecanoyl-L-lysyl-[protein] + NAD(+) + H2O = 2''-O-hexadecanoyl-ADP-D-ribose + nicotinamide + L-lysyl-[protein]. With respect to regulation, inhibited by Sirtinol, A3 and M15 small molecules. Inhibited by nicotinamide. Inhibited by a macrocyclic peptide inhibitor S2iL5. Inhibited by EP300-induced acetylation. NAD-dependent protein deacetylase, which deacetylates internal lysines on histone and alpha-tubulin as well as many other proteins such as key transcription factors. Participates in the modulation of multiple and diverse biological processes such as cell cycle control, genomic integrity, microtubule dynamics, cell differentiation, metabolic networks, and autophagy. Plays a major role in the control of cell cycle progression and genomic stability. Functions in the antephase checkpoint preventing precocious mitotic entry in response to microtubule stress agents, and hence allowing proper inheritance of chromosomes. Positively regulates the anaphase promoting complex/cyclosome (APC/C) ubiquitin ligase complex activity by deacetylating CDC20 and FZR1, then allowing progression through mitosis. Associates both with chromatin at transcriptional start sites (TSSs) and enhancers of active genes. Plays a role in cell cycle and chromatin compaction through epigenetic modulation of the regulation of histone H4 'Lys-20' methylation (H4K20me1) during early mitosis. Specifically deacetylates histone H4 at 'Lys-16' (H4K16ac) between the G2/M transition and metaphase enabling H4K20me1 deposition by KMT5A leading to ulterior levels of H4K20me2 and H4K20me3 deposition throughout cell cycle, and mitotic S-phase progression. Deacetylates KMT5A modulating KMT5A chromatin localization during the mitotic stress response. Also deacetylates histone H3 at 'Lys-57' (H3K56ac) during the mitotic G2/M transition. During oocyte meiosis progression, may deacetylate histone H4 at 'Lys-16' (H4K16ac) and alpha-tubulin, regulating spindle assembly and chromosome alignment by influencing microtubule dynamics and kinetochore function. Deacetylates histone H4 at 'Lys-16' (H4K16ac) at the VEGFA promoter and thereby contributes to regulate expression of VEGFA, a key regulator of angiogenesis. Deacetylates alpha-tubulin at 'Lys-40' and hence controls neuronal motility, oligodendroglial cell arbor projection processes and proliferation of non-neuronal cells. Phosphorylation at Ser-368 by a G1/S-specific cyclin E-CDK2 complex inactivates SIRT2-mediated alpha-tubulin deacetylation, negatively regulating cell adhesion, cell migration and neurite outgrowth during neuronal differentiation. Deacetylates PARD3 and participates in the regulation of Schwann cell peripheral myelination formation during early postnatal development and during postinjury remyelination. Involved in several cellular metabolic pathways. Plays a role in the regulation of blood glucose homeostasis by deacetylating and stabilizing phosphoenolpyruvate carboxykinase PCK1 activity in response to low nutrient availability. Acts as a key regulator in the pentose phosphate pathway (PPP) by deacetylating and activating the glucose-6-phosphate G6PD enzyme, and therefore, stimulates the production of cytosolic NADPH to counteract oxidative damage. Maintains energy homeostasis in response to nutrient deprivation as well as energy expenditure by inhibiting adipogenesis and promoting lipolysis. Attenuates adipocyte differentiation by deacetylating and promoting FOXO1 interaction to PPARG and subsequent repression of PPARG-dependent transcriptional activity. Plays a role in the regulation of lysosome-mediated degradation of protein aggregates by autophagy in neuronal cells. Deacetylates FOXO1 in response to oxidative stress or serum deprivation, thereby negatively regulating FOXO1-mediated autophagy. Deacetylates a broad range of transcription factors and co-regulators regulating target gene expression. Deacetylates transcriptional factor FOXO3 stimulating the ubiquitin ligase SCF(SKP2)-mediated FOXO3 ubiquitination and degradation. Deacetylates HIF1A and therefore promotes HIF1A degradation and inhibition of HIF1A transcriptional activity in tumor cells in response to hypoxia. Deacetylates RELA in the cytoplasm inhibiting NF-kappaB-dependent transcription activation upon TNF-alpha stimulation. Inhibits transcriptional activation by deacetylating p53/TP53 and EP300. Also deacetylates EIF5A. Functions as a negative regulator on oxidative stress-tolerance in response to anoxia-reoxygenation conditions. Plays a role as tumor suppressor. In addition to protein deacetylase activity, also has activity toward long-chain fatty acyl groups and mediates protein-lysine demyristoylation and depalmitoylation of target proteins, such as ARF6 and KRAS, thereby regulating their association with membranes. Its function is as follows. Deacetylates alpha-tubulin. The sequence is that of NAD-dependent protein deacetylase sirtuin-2 (Sirt2) from Mus musculus (Mouse).